Consider the following 64-residue polypeptide: Small ribosomal subunit protein eS17 (64 aa).

The protein belongs to the eukaryotic ribosomal protein eS17 family.

This is Small ribosomal subunit protein eS17 from Methanococcoides burtonii (strain DSM 6242 / NBRC 107633 / OCM 468 / ACE-M).